The chain runs to 560 residues: Potassium-transporting ATPase potassium-binding subunit (560 aa).

12 helical membrane passes run 11–31 (IFLL…VAFF), 63–83 (SYCT…YGLL), 134–154 (FVTM…TALI), 179–199 (LLPL…PQTF), 254–274 (VIEM…YGHA), 282–302 (WVLF…VYNA), 329–349 (FGIP…TGSV), 356–376 (LTPI…VFGG), 379–399 (VGFV…GLMV), 417–437 (LIVI…AIAL), 488–508 (VVML…AGSL), and 530–550 (VILF…VLIL).

It belongs to the KdpA family. The system is composed of three essential subunits: KdpA, KdpB and KdpC.

The protein localises to the cell membrane. Its function is as follows. Part of the high-affinity ATP-driven potassium transport (or Kdp) system, which catalyzes the hydrolysis of ATP coupled with the electrogenic transport of potassium into the cytoplasm. This subunit binds the extracellular potassium ions and delivers the ions to the membrane domain of KdpB through an intramembrane tunnel. This chain is Potassium-transporting ATPase potassium-binding subunit, found in Geobacillus kaustophilus (strain HTA426).